Here is a 116-residue protein sequence, read N- to C-terminus: Large ribosomal subunit protein uL18 (116 aa).

Belongs to the universal ribosomal protein uL18 family. As to quaternary structure, part of the 50S ribosomal subunit; part of the 5S rRNA/L5/L18/L25 subcomplex. Contacts the 5S and 23S rRNAs.

Functionally, this is one of the proteins that bind and probably mediate the attachment of the 5S RNA into the large ribosomal subunit, where it forms part of the central protuberance. This Shewanella baltica (strain OS223) protein is Large ribosomal subunit protein uL18.